The primary structure comprises 153 residues: Myosin regulatory light chain (153 aa).

Alanine 1 is modified (blocked amino end (Ala)). EF-hand domains are found at residues 15 to 50 (KQIQ…LGRT) and 81 to 116 (DSEE…MGNN). Aspartate 28, aspartate 30, aspartate 32, and aspartate 39 together coordinate Ca(2+).

In terms of biological role, in molluscan muscle, calcium regulation is associated with myosin rather than with actin. Muscle myosin contains two types of light chains: the catalytic light chain, essential for ATPase activity, and the regulatory light chain, a calcium-binding protein responsible for Ca(2+) dependent binding and Ca(2+) dependent Mg-ATPase activity. The chain is Myosin regulatory light chain from Patinopecten sp. (Scallop).